Here is a 397-residue protein sequence, read N- to C-terminus: Phosphoglycerate kinase (397 aa).

Substrate is bound by residues 25 to 27, Arg-41, 64 to 67, Arg-118, and Arg-151; these read DLN and HLGR. ATP contacts are provided by residues Lys-202, Glu-324, and 350–353; that span reads GGDT.

It belongs to the phosphoglycerate kinase family. In terms of assembly, monomer.

The protein localises to the cytoplasm. It catalyses the reaction (2R)-3-phosphoglycerate + ATP = (2R)-3-phospho-glyceroyl phosphate + ADP. Its pathway is carbohydrate degradation; glycolysis; pyruvate from D-glyceraldehyde 3-phosphate: step 2/5. This is Phosphoglycerate kinase from Herminiimonas arsenicoxydans.